The chain runs to 241 residues: 2-C-methyl-D-erythritol 4-phosphate cytidylyltransferase (241 aa).

The protein belongs to the IspD/TarI cytidylyltransferase family. IspD subfamily.

It carries out the reaction 2-C-methyl-D-erythritol 4-phosphate + CTP + H(+) = 4-CDP-2-C-methyl-D-erythritol + diphosphate. Its pathway is isoprenoid biosynthesis; isopentenyl diphosphate biosynthesis via DXP pathway; isopentenyl diphosphate from 1-deoxy-D-xylulose 5-phosphate: step 2/6. Functionally, catalyzes the formation of 4-diphosphocytidyl-2-C-methyl-D-erythritol from CTP and 2-C-methyl-D-erythritol 4-phosphate (MEP). This Pseudoalteromonas translucida (strain TAC 125) protein is 2-C-methyl-D-erythritol 4-phosphate cytidylyltransferase.